Reading from the N-terminus, the 118-residue chain is Ribonuclease P protein component (118 aa).

Belongs to the RnpA family. In terms of assembly, consists of a catalytic RNA component (M1 or rnpB) and a protein subunit.

It carries out the reaction Endonucleolytic cleavage of RNA, removing 5'-extranucleotides from tRNA precursor.. In terms of biological role, RNaseP catalyzes the removal of the 5'-leader sequence from pre-tRNA to produce the mature 5'-terminus. It can also cleave other RNA substrates such as 4.5S RNA. The protein component plays an auxiliary but essential role in vivo by binding to the 5'-leader sequence and broadening the substrate specificity of the ribozyme. This Vibrio cholerae serotype O1 (strain ATCC 39541 / Classical Ogawa 395 / O395) protein is Ribonuclease P protein component.